The sequence spans 128 residues: Protein BEX2 (128 aa).

Omega-N-methylarginine is present on Arg-50. The segment at 107–128 (SLRAVSTDPPHHDHHDEFCLMP) is disordered. Residues 115–128 (PPHHDHHDEFCLMP) are compositionally biased toward basic and acidic residues. Residues 117-121 (HHDHH) form a his cluster region. Residue Cys-125 participates in Zn(2+) binding.

This sequence belongs to the BEX family. Interacts with LMO2, possibly leading to regulate the transcriptional activity of a DNA-binding complex containing LMO2. Interacts with OMP. In terms of tissue distribution, expressed in central nervous system, with high level in pituitary, cerebellum and temporal lobe. Widely expressed in breast cancer cell lines.

Its subcellular location is the cytoplasm. The protein resides in the nucleus. Its function is as follows. Regulator of mitochondrial apoptosis and G1 cell cycle in breast cancer. Protects the breast cancer cells against mitochondrial apoptosis and this effect is mediated through the modulation of BCL2 protein family, which involves the positive regulation of anti-apoptotic member BCL2 and the negative regulation of pro-apoptotic members BAD, BAK1 and PUMA. Required for the normal cell cycle progression during G1 in breast cancer cells through the regulation of CCND1 and CDKN1A. Regulates the level of PP2A regulatory subunit B and PP2A phosphatase activity. In absence of reductive stress, acts as a pseudosubstrate for the CRL2(FEM1B) complex: associates with FEM1B via zinc, thereby preventing association between FEM1B and its substrates. In Homo sapiens (Human), this protein is Protein BEX2 (BEX2).